The primary structure comprises 157 residues: Small ribosomal subunit protein uS7 (157 aa).

It belongs to the universal ribosomal protein uS7 family. As to quaternary structure, part of the 30S ribosomal subunit. Contacts proteins S9 and S11.

Functionally, one of the primary rRNA binding proteins, it binds directly to 16S rRNA where it nucleates assembly of the head domain of the 30S subunit. Is located at the subunit interface close to the decoding center, probably blocks exit of the E-site tRNA. This chain is Small ribosomal subunit protein uS7, found in Chloroflexus aurantiacus (strain ATCC 29366 / DSM 635 / J-10-fl).